The primary structure comprises 433 residues: MTDFFAGIPQIRYEGEGSSNEFAFRHYNPDEVILGKRMEDHLRFAVAWWHSFAWPGGDPFGGQTFDRPWFGDTLDLAKLKADVAFEMFDILGAPFFCFHDADIRPEGATFAESKRNLEEIVDHIGIRMEGSKTKLLWGTANLFSHRRFMSGAATNPDPDVFAWSAATVKGCMDATMKLGGANYVLWGGREGYETLLNTDLTREAENAGRFLQMVVDYKHKIGFQGTILIEPKPQEPSKHQYDYDVATVYGFLKRFGLEKEVKLNIEQGHAILAGHSFEHELALAASLGILGSIDMNRNDYQSGWDTDQFPHNHPEMALAYYEILRAGGFTTGGTNFDAKIRRQSLDPEDLVLAHVGGMDTCARALKAAARLYEDGSLETARAARYAGWETPEAQAMLASSLEKIEARVLAEGINPEPRSGRQERLENLWNRFV.

Catalysis depends on residues histidine 99 and aspartate 102. Residues glutamate 230, glutamate 266, histidine 269, aspartate 294, aspartate 305, aspartate 307, and aspartate 337 each contribute to the Mg(2+) site.

The protein belongs to the xylose isomerase family. Homotetramer. The cofactor is Mg(2+).

Its subcellular location is the cytoplasm. The enzyme catalyses alpha-D-xylose = alpha-D-xylulofuranose. This is Xylose isomerase from Cereibacter sphaeroides (strain ATCC 17023 / DSM 158 / JCM 6121 / CCUG 31486 / LMG 2827 / NBRC 12203 / NCIMB 8253 / ATH 2.4.1.) (Rhodobacter sphaeroides).